The chain runs to 622 residues: Low affinity potassium transport system protein Kup (622 aa).

A run of 12 helical transmembrane segments spans residues 9–29 (LSAI…TSPL), 49–69 (VFGF…IKYL), 103–123 (VIMG…TPAI), 137–157 (PELD…LFMI), 165–185 (VGKL…GLGL), 213–233 (VSFI…ALYA), 247–267 (WFSV…ALLL), 276–296 (PFFL…AALA), 337–357 (IYIP…IVSF), 363–383 (LAAA…ILST), 396–416 (FVAL…SANL), and 419–439 (LLSG…IMTT).

Belongs to the HAK/KUP transporter (TC 2.A.72) family.

It localises to the cell inner membrane. The catalysed reaction is K(+)(in) + H(+)(in) = K(+)(out) + H(+)(out). Responsible for the low-affinity transport of potassium into the cell. Likely operates as a K(+):H(+) symporter. The polypeptide is Low affinity potassium transport system protein Kup (Citrobacter koseri (strain ATCC BAA-895 / CDC 4225-83 / SGSC4696)).